A 586-amino-acid polypeptide reads, in one-letter code: Acetylcholinesterase (586 aa).

An N-terminal signal peptide occupies residues 1–21; the sequence is MNLLVTSSLGVLLHLVVLCQA. Asn80 carries an N-linked (GlcNAc...) asparagine glycan. Cysteines 88 and 115 form a disulfide. The active-site Acyl-ester intermediate is the Ser221. Cys275 and Cys286 are oxidised to a cystine. The Charge relay system role is filled by Glu348. Cys423 and Cys542 form a disulfide bridge. Asn437 is a glycosylation site (N-linked (GlcNAc...) asparagine). The active-site Charge relay system is His461. N-linked (GlcNAc...) asparagine glycans are attached at residues Asn478 and Asn554. The GPI-anchor amidated serine moiety is linked to residue Ser564. The propeptide at 565-586 is removed in mature form; that stretch reads SGTSSSKGIIFYVLFSILYLIF.

This sequence belongs to the type-B carboxylesterase/lipase family. Isoform H form is a homodimer; the asymmetric form is a disulfide-bonded oligomer composed of a collagenic subunit (Q) and a variable number of T catalytic subunits. An interchain disulfide bond is present in what becomes position 593 of the T isoform. Found in the synapses and to a lower extent in extrajunctional areas of muscle and nerve, and on erythrocyte membranes.

The protein localises to the cell membrane. It is found in the synapse. The enzyme catalyses acetylcholine + H2O = choline + acetate + H(+). Its activity is regulated as follows. Inhibited by substrate concentrations above 0.5 mM. Terminates signal transduction at the neuromuscular junction by rapid hydrolysis of the acetylcholine released into the synaptic cleft. May be involved in cell-cell interactions. In Tetronarce californica (Pacific electric ray), this protein is Acetylcholinesterase (ache).